The following is a 1007-amino-acid chain: Integrator complex subunit 8 (1007 aa).

The short motif at 19 to 24 is the WFEF motif element; the sequence is WFEFLL. Residues 56-78 are compositionally biased toward polar residues; that stretch reads TAQESVGTPGSDLQNLNQTPSNS. The disordered stretch occupies residues 56-112; sequence TAQESVGTPGSDLQNLNQTPSNSGPIPGVVGGAPAPTTPTASGGVGMPHSPQRPAEK. The span at 79–97 shows a compositional bias: low complexity; sequence GPIPGVVGGAPAPTTPTAS.

The protein belongs to the Integrator subunit 8 family. As to quaternary structure, belongs to the multiprotein complex Integrator, at least composed of IntS1, IntS2, IntS3, IntS4, omd/IntS5, IntS6, defl/IntS7, IntS8, IntS9, IntS10, IntS11, IntS12, asun/IntS13, IntS14 and IntS15. The core complex associates with protein phosphatase 2A subunits mts/PP2A and Pp2A-29B, to form the Integrator-PP2A (INTAC) complex.

The protein localises to the nucleus. The protein resides in the chromosome. Functionally, component of the integrator complex, a multiprotein complex that terminates RNA polymerase II (Pol II) transcription in the promoter-proximal region of genes. The integrator complex provides a quality checkpoint during transcription elongation by driving premature transcription termination of transcripts that are unfavorably configured for transcriptional elongation: the complex terminates transcription by (1) catalyzing dephosphorylation of the C-terminal domain (CTD) of Pol II subunit Polr2A/Rbp1 and Spt5, and (2) degrading the exiting nascent RNA transcript via endonuclease activity. The integrator complex is also involved in the 3'-end processing of the U7 snRNA, and also the spliceosomal snRNAs U1, U2, U4 and U5. Within the integrator complex, INTS8 is required for the recruitment of protein phosphatase 2A (PP2A) to transcription pause-release checkpoint. In Drosophila melanogaster (Fruit fly), this protein is Integrator complex subunit 8.